Here is a 21-residue protein sequence, read N- to C-terminus: Formate ester dehydrogenase beta chain (21 aa).

As to quaternary structure, heterotrimer composed of an alpha, a beta and a gamma chain.

The chain is Formate ester dehydrogenase beta chain from Amycolatopsis methanolica.